Reading from the N-terminus, the 433-residue chain is 3-phosphoshikimate 1-carboxyvinyltransferase (433 aa).

Residues Lys21, Ser22, and Arg26 each coordinate 3-phosphoshikimate. A phosphoenolpyruvate-binding site is contributed by Lys21. Gly92 and Arg120 together coordinate phosphoenolpyruvate. 3-phosphoshikimate-binding residues include Ser166, Gln168, Asp317, and Lys344. Gln168 contacts phosphoenolpyruvate. Asp317 serves as the catalytic Proton acceptor. The phosphoenolpyruvate site is built by Arg348 and Arg391.

Belongs to the EPSP synthase family. As to quaternary structure, monomer.

It is found in the cytoplasm. The catalysed reaction is 3-phosphoshikimate + phosphoenolpyruvate = 5-O-(1-carboxyvinyl)-3-phosphoshikimate + phosphate. The protein operates within metabolic intermediate biosynthesis; chorismate biosynthesis; chorismate from D-erythrose 4-phosphate and phosphoenolpyruvate: step 6/7. Functionally, catalyzes the transfer of the enolpyruvyl moiety of phosphoenolpyruvate (PEP) to the 5-hydroxyl of shikimate-3-phosphate (S3P) to produce enolpyruvyl shikimate-3-phosphate and inorganic phosphate. In Caldicellulosiruptor saccharolyticus (strain ATCC 43494 / DSM 8903 / Tp8T 6331), this protein is 3-phosphoshikimate 1-carboxyvinyltransferase.